The primary structure comprises 185 residues: dTDP-4-dehydrorhamnose 3,5-epimerase (185 aa).

Substrate contacts are provided by residues Arg-23, Glu-28, Gln-47–Asn-49, and Arg-59. The active-site Proton acceptor is His-62. Substrate contacts are provided by Lys-72 and His-119. Tyr-132 serves as the catalytic Proton donor. Asp-143 and Lys-168 together coordinate substrate.

It belongs to the dTDP-4-dehydrorhamnose 3,5-epimerase family. In terms of assembly, homodimer.

The enzyme catalyses dTDP-4-dehydro-6-deoxy-alpha-D-glucose = dTDP-4-dehydro-beta-L-rhamnose. It functions in the pathway carbohydrate biosynthesis; dTDP-L-rhamnose biosynthesis. Its pathway is bacterial outer membrane biogenesis; LPS O-antigen biosynthesis. Its function is as follows. Catalyzes the epimerization of the C3' and C5'positions of dTDP-6-deoxy-D-xylo-4-hexulose, forming dTDP-6-deoxy-L-lyxo-4-hexulose. This chain is dTDP-4-dehydrorhamnose 3,5-epimerase (rfbC), found in Escherichia coli (strain K12).